The primary structure comprises 352 residues: Phosphoribosylformylglycinamidine cyclo-ligase (352 aa).

Belongs to the AIR synthase family.

The protein localises to the cytoplasm. The enzyme catalyses 2-formamido-N(1)-(5-O-phospho-beta-D-ribosyl)acetamidine + ATP = 5-amino-1-(5-phospho-beta-D-ribosyl)imidazole + ADP + phosphate + H(+). The protein operates within purine metabolism; IMP biosynthesis via de novo pathway; 5-amino-1-(5-phospho-D-ribosyl)imidazole from N(2)-formyl-N(1)-(5-phospho-D-ribosyl)glycinamide: step 2/2. This Saccharophagus degradans (strain 2-40 / ATCC 43961 / DSM 17024) protein is Phosphoribosylformylglycinamidine cyclo-ligase.